Consider the following 397-residue polypeptide: Phosphoglycerate kinase (397 aa).

Substrate contacts are provided by residues 25 to 27 (DLN), Arg-41, 64 to 67 (HLGR), Arg-118, and Arg-151. ATP contacts are provided by residues Lys-202, Glu-324, and 350 to 353 (GGDT).

This sequence belongs to the phosphoglycerate kinase family. Monomer.

It localises to the cytoplasm. The enzyme catalyses (2R)-3-phosphoglycerate + ATP = (2R)-3-phospho-glyceroyl phosphate + ADP. It functions in the pathway carbohydrate degradation; glycolysis; pyruvate from D-glyceraldehyde 3-phosphate: step 2/5. The sequence is that of Phosphoglycerate kinase from Janthinobacterium sp. (strain Marseille) (Minibacterium massiliensis).